Here is a 277-residue protein sequence, read N- to C-terminus: uncharacterized protein (277 aa).

3 Solcar repeats span residues 1–84 (MDQA…SKRV), 96–179 (ISVL…LKLW), and 184–268 (PTSL…VGMH). A run of 6 helical transmembrane segments spans residues 3–24 (QAIA…LDLA), 60–80 (LSIN…IYDF), 102–122 (LCSS…IWVV), 152–172 (CYAG…QFMA), 190–210 (IFMS…LLVI), and 240–261 (FYKG…TFLV).

Belongs to the mitochondrial carrier (TC 2.A.29) family.

It is found in the mitochondrion inner membrane. This is an uncharacterized protein from Schizosaccharomyces pombe (strain 972 / ATCC 24843) (Fission yeast).